Consider the following 377-residue polypeptide: 3-dehydroquinate synthase (377 aa).

Residues 113–117, 137–138, Lys-150, Lys-159, and 177–180 each bind NAD(+); these read GVIGD, TT, and FLDT. Zn(2+) is bound by residues Glu-192, His-254, and His-273.

It belongs to the sugar phosphate cyclases superfamily. Dehydroquinate synthase family. Co(2+) is required as a cofactor. Requires Zn(2+) as cofactor. NAD(+) serves as cofactor.

The protein resides in the cytoplasm. The catalysed reaction is 7-phospho-2-dehydro-3-deoxy-D-arabino-heptonate = 3-dehydroquinate + phosphate. It functions in the pathway metabolic intermediate biosynthesis; chorismate biosynthesis; chorismate from D-erythrose 4-phosphate and phosphoenolpyruvate: step 2/7. Catalyzes the conversion of 3-deoxy-D-arabino-heptulosonate 7-phosphate (DAHP) to dehydroquinate (DHQ). This chain is 3-dehydroquinate synthase, found in Bartonella quintana (strain Toulouse) (Rochalimaea quintana).